The sequence spans 427 residues: 3-phosphoshikimate 1-carboxyvinyltransferase (427 aa).

Residues lysine 22, serine 23, and arginine 27 each coordinate 3-phosphoshikimate. Position 22 (lysine 22) interacts with phosphoenolpyruvate. Residues glycine 96 and arginine 124 each contribute to the phosphoenolpyruvate site. Residues serine 169, serine 170, glutamine 171, serine 197, aspartate 313, asparagine 336, and lysine 340 each contribute to the 3-phosphoshikimate site. Glutamine 171 provides a ligand contact to phosphoenolpyruvate. The Proton acceptor role is filled by aspartate 313. Phosphoenolpyruvate-binding residues include arginine 344, arginine 386, and lysine 411.

This sequence belongs to the EPSP synthase family. In terms of assembly, monomer.

It is found in the cytoplasm. It carries out the reaction 3-phosphoshikimate + phosphoenolpyruvate = 5-O-(1-carboxyvinyl)-3-phosphoshikimate + phosphate. The protein operates within metabolic intermediate biosynthesis; chorismate biosynthesis; chorismate from D-erythrose 4-phosphate and phosphoenolpyruvate: step 6/7. Its function is as follows. Catalyzes the transfer of the enolpyruvyl moiety of phosphoenolpyruvate (PEP) to the 5-hydroxyl of shikimate-3-phosphate (S3P) to produce enolpyruvyl shikimate-3-phosphate and inorganic phosphate. This Shigella flexneri serotype 5b (strain 8401) protein is 3-phosphoshikimate 1-carboxyvinyltransferase.